Reading from the N-terminus, the 269-residue chain is Glutamate racemase (269 aa).

Substrate is bound by residues 11–12 (DS) and 43–44 (YG). Cys74 acts as the Proton donor/acceptor in catalysis. 75 to 76 (NT) serves as a coordination point for substrate. Cys185 (proton donor/acceptor) is an active-site residue. Substrate is bound at residue 186-187 (TH).

This sequence belongs to the aspartate/glutamate racemases family.

It carries out the reaction L-glutamate = D-glutamate. It functions in the pathway cell wall biogenesis; peptidoglycan biosynthesis. Provides the (R)-glutamate required for cell wall biosynthesis. This chain is Glutamate racemase, found in Bacillus cereus (strain G9842).